The sequence spans 290 residues: Nitrogenase iron protein 1 (290 aa).

10–17 (GKGGIGKS) provides a ligand contact to ATP. C98 is a binding site for [4Fe-4S] cluster. An ADP-ribosylarginine; by dinitrogenase reductase ADP-ribosyltransferase modification is found at R101. C133 contributes to the [4Fe-4S] cluster binding site.

It belongs to the NifH/BchL/ChlL family. As to quaternary structure, homodimer. The cofactor is [4Fe-4S] cluster. The reversible ADP-ribosylation of Arg-101 inactivates the nitrogenase reductase and regulates nitrogenase activity.

The enzyme catalyses N2 + 8 reduced [2Fe-2S]-[ferredoxin] + 16 ATP + 16 H2O = H2 + 8 oxidized [2Fe-2S]-[ferredoxin] + 2 NH4(+) + 16 ADP + 16 phosphate + 6 H(+). Nitrogenase holoenzyme is subject to 'conformational protection' by FeSII; under oxidizing conditions FeSII binds to the holoenzyme and reversibly protects it from oxidation. Functionally, the key enzymatic reactions in nitrogen fixation are catalyzed by the nitrogenase complex, which has 2 components: the iron protein (component 2) and a component 1 which is either a molybdenum-iron protein, a vanadium-iron, or an iron-iron protein. This chain is Nitrogenase iron protein 1 (nifH1), found in Azotobacter vinelandii.